We begin with the raw amino-acid sequence, 388 residues long: Succinate--CoA ligase [ADP-forming] subunit beta (388 aa).

An ATP-grasp domain is found at 9 to 244; sequence KQLFAEYGLP…PSQEDSREAE (236 aa). ATP-binding positions include K46, 53–55, E99, T102, and E107; that span reads GRG. The Mg(2+) site is built by N199 and D213. Substrate contacts are provided by residues N264 and 321 to 323; that span reads GIV.

It belongs to the succinate/malate CoA ligase beta subunit family. Heterotetramer of two alpha and two beta subunits. The cofactor is Mg(2+).

It carries out the reaction succinate + ATP + CoA = succinyl-CoA + ADP + phosphate. The enzyme catalyses GTP + succinate + CoA = succinyl-CoA + GDP + phosphate. It functions in the pathway carbohydrate metabolism; tricarboxylic acid cycle; succinate from succinyl-CoA (ligase route): step 1/1. Functionally, succinyl-CoA synthetase functions in the citric acid cycle (TCA), coupling the hydrolysis of succinyl-CoA to the synthesis of either ATP or GTP and thus represents the only step of substrate-level phosphorylation in the TCA. The beta subunit provides nucleotide specificity of the enzyme and binds the substrate succinate, while the binding sites for coenzyme A and phosphate are found in the alpha subunit. This Marinobacter nauticus (strain ATCC 700491 / DSM 11845 / VT8) (Marinobacter aquaeolei) protein is Succinate--CoA ligase [ADP-forming] subunit beta.